Here is a 436-residue protein sequence, read N- to C-terminus: Histidine--tRNA ligase 1 (436 aa).

It belongs to the class-II aminoacyl-tRNA synthetase family. As to quaternary structure, homodimer.

The protein resides in the cytoplasm. The enzyme catalyses tRNA(His) + L-histidine + ATP = L-histidyl-tRNA(His) + AMP + diphosphate + H(+). The protein is Histidine--tRNA ligase 1 of Bacillus cereus (strain ATCC 10987 / NRS 248).